The sequence spans 342 residues: Isopentenyl-diphosphate delta-isomerase (342 aa).

11 to 12 (RK) contacts substrate. FMN contacts are provided by residues Ser68, 69–71 (SMT), Ser99, and Asn128. Residue 99 to 101 (SQR) participates in substrate binding. Gln162 serves as a coordination point for substrate. Glu163 provides a ligand contact to Mg(2+). Residues Lys194, Ser219, Thr224, 275-277 (GVR), and 296-297 (AK) each bind FMN.

Belongs to the IPP isomerase type 2 family. Homooctamer. Dimer of tetramers. The cofactor is FMN. Requires NADPH as cofactor. Mg(2+) is required as a cofactor.

The protein localises to the cytoplasm. The catalysed reaction is isopentenyl diphosphate = dimethylallyl diphosphate. In terms of biological role, involved in the biosynthesis of isoprenoids. Catalyzes the 1,3-allylic rearrangement of the homoallylic substrate isopentenyl (IPP) to its allylic isomer, dimethylallyl diphosphate (DMAPP). The protein is Isopentenyl-diphosphate delta-isomerase of Legionella pneumophila (strain Corby).